The primary structure comprises 417 residues: 4-hydroxy-3-methylbut-2-en-1-yl diphosphate synthase (flavodoxin) (417 aa).

[4Fe-4S] cluster contacts are provided by cysteine 304, cysteine 307, cysteine 350, and glutamate 357.

Belongs to the IspG family. The cofactor is [4Fe-4S] cluster.

It carries out the reaction (2E)-4-hydroxy-3-methylbut-2-enyl diphosphate + oxidized [flavodoxin] + H2O + 2 H(+) = 2-C-methyl-D-erythritol 2,4-cyclic diphosphate + reduced [flavodoxin]. The protein operates within isoprenoid biosynthesis; isopentenyl diphosphate biosynthesis via DXP pathway; isopentenyl diphosphate from 1-deoxy-D-xylulose 5-phosphate: step 5/6. Converts 2C-methyl-D-erythritol 2,4-cyclodiphosphate (ME-2,4cPP) into 1-hydroxy-2-methyl-2-(E)-butenyl 4-diphosphate. The sequence is that of 4-hydroxy-3-methylbut-2-en-1-yl diphosphate synthase (flavodoxin) from Rhizobium meliloti (strain 1021) (Ensifer meliloti).